Consider the following 354-residue polypeptide: Uroporphyrinogen decarboxylase (354 aa).

Residues 27 to 31, aspartate 77, tyrosine 154, threonine 209, and histidine 327 each bind substrate; that span reads RQAGR.

This sequence belongs to the uroporphyrinogen decarboxylase family. As to quaternary structure, homodimer.

It localises to the cytoplasm. The enzyme catalyses uroporphyrinogen III + 4 H(+) = coproporphyrinogen III + 4 CO2. Its pathway is porphyrin-containing compound metabolism; protoporphyrin-IX biosynthesis; coproporphyrinogen-III from 5-aminolevulinate: step 4/4. Its function is as follows. Catalyzes the decarboxylation of four acetate groups of uroporphyrinogen-III to yield coproporphyrinogen-III. The protein is Uroporphyrinogen decarboxylase of Actinobacillus pleuropneumoniae serotype 5b (strain L20).